Reading from the N-terminus, the 384-residue chain is 1-deoxy-D-xylulose 5-phosphate reductoisomerase (384 aa).

NADPH contacts are provided by threonine 10, glycine 11, serine 12, isoleucine 13, glycine 36, and asparagine 123. Position 124 (lysine 124) interacts with 1-deoxy-D-xylulose 5-phosphate. Glutamate 125 contributes to the NADPH binding site. Aspartate 149 contributes to the Mn(2+) binding site. 1-deoxy-D-xylulose 5-phosphate contacts are provided by serine 150, glutamate 151, serine 175, and histidine 198. Residue glutamate 151 coordinates Mn(2+). Glycine 204 lines the NADPH pocket. 1-deoxy-D-xylulose 5-phosphate contacts are provided by serine 211, asparagine 216, lysine 217, and glutamate 220. Position 220 (glutamate 220) interacts with Mn(2+).

The protein belongs to the DXR family. Mg(2+) serves as cofactor. Mn(2+) is required as a cofactor.

The enzyme catalyses 2-C-methyl-D-erythritol 4-phosphate + NADP(+) = 1-deoxy-D-xylulose 5-phosphate + NADPH + H(+). The protein operates within isoprenoid biosynthesis; isopentenyl diphosphate biosynthesis via DXP pathway; isopentenyl diphosphate from 1-deoxy-D-xylulose 5-phosphate: step 1/6. Functionally, catalyzes the NADPH-dependent rearrangement and reduction of 1-deoxy-D-xylulose-5-phosphate (DXP) to 2-C-methyl-D-erythritol 4-phosphate (MEP). The chain is 1-deoxy-D-xylulose 5-phosphate reductoisomerase from Chlorobium phaeovibrioides (strain DSM 265 / 1930) (Prosthecochloris vibrioformis (strain DSM 265)).